We begin with the raw amino-acid sequence, 70 residues long: Protease inhibitor HPI (70 aa).

N-acetylalanine is present on A2. C5 is subject to S-glutathionyl cysteine; alternate.

It belongs to the protease inhibitor I13 (potato type I serine protease inhibitor) family. Monomer and homodimer; disulfide-linked. In terms of processing, occurs in 3 forms that differ in the modification of Cys-5, HPI-1 forms a homodimer through a disulfide bond, HPI-2a is modified by glutathionylation, and HPI-2b is covalently modified by addition of an unidentified adduct but not by a disulfide linkage.

In terms of biological role, inhibitor of serine proteases, strongly inhibits subtilisin A and weakly inhibits trypsin. Does not inhibit chymotrypsin, papain, pepsin, pronase E, protease type XIII and thermolysin. HPI-1 inhibits subtilisin A with an Ki of 0.21 nM. HPI-2a inhibits subtilisin A with an Ki of 0.08 nM. HPI-2b inhibits subtilisin A with an Ki of 0.1 nM. The chain is Protease inhibitor HPI from Hevea brasiliensis (Para rubber tree).